A 398-amino-acid chain; its full sequence is Homocysteine-responsive endoplasmic reticulum-resident ubiquitin-like domain member 2 protein (398 aa).

The Ubiquitin-like domain occupies 11–90; the sequence is VTLVIKAPNQ…HMVHLVCASR (80 aa). 2 disordered regions span residues 90 to 143 and 212 to 247; these read RTPP…SIRH and NQSTSNGENAQPVPRPVTNSENPPPNPPRAPPNVAP. The span at 96 to 125 shows a compositional bias: low complexity; that stretch reads PKASKSSKSMGTSSSGRSSSSGSANPGSTS. Residues 233–245 show a composition bias toward pro residues; sequence NPPPNPPRAPPNV. Residues 298–318 traverse the membrane as a helical segment; that stretch reads FVMVMGALILVYMHQAGWFPL.

Its subcellular location is the membrane. Functionally, could be involved in the unfolded protein response (UPR) pathway. This is Homocysteine-responsive endoplasmic reticulum-resident ubiquitin-like domain member 2 protein (herpud2) from Xenopus laevis (African clawed frog).